We begin with the raw amino-acid sequence, 248 residues long: Probable transcriptional regulatory protein Acel_1346 (248 aa).

Belongs to the TACO1 family.

It localises to the cytoplasm. This is Probable transcriptional regulatory protein Acel_1346 from Acidothermus cellulolyticus (strain ATCC 43068 / DSM 8971 / 11B).